The chain runs to 424 residues: Serine--tRNA ligase (424 aa).

Residue 231–233 (TAE) participates in L-serine binding. 262-264 (RAE) contacts ATP. Glutamate 285 is an L-serine binding site. 349-352 (EISS) is an ATP binding site. Serine 385 is an L-serine binding site.

The protein belongs to the class-II aminoacyl-tRNA synthetase family. Type-1 seryl-tRNA synthetase subfamily. Homodimer. The tRNA molecule binds across the dimer.

The protein localises to the cytoplasm. It catalyses the reaction tRNA(Ser) + L-serine + ATP = L-seryl-tRNA(Ser) + AMP + diphosphate + H(+). The catalysed reaction is tRNA(Sec) + L-serine + ATP = L-seryl-tRNA(Sec) + AMP + diphosphate + H(+). The protein operates within aminoacyl-tRNA biosynthesis; selenocysteinyl-tRNA(Sec) biosynthesis; L-seryl-tRNA(Sec) from L-serine and tRNA(Sec): step 1/1. Catalyzes the attachment of serine to tRNA(Ser). Is also able to aminoacylate tRNA(Sec) with serine, to form the misacylated tRNA L-seryl-tRNA(Sec), which will be further converted into selenocysteinyl-tRNA(Sec). The sequence is that of Serine--tRNA ligase from Geobacillus sp. (strain WCH70).